A 352-amino-acid polypeptide reads, in one-letter code: Homeobox protein Mohawk (352 aa).

The disordered stretch occupies residues 19-54; that stretch reads GASERERGGRPYSGVLDSPHARPEVGIPDGPPLKDN. A DNA-binding region (homeobox; TALE-type) is located at residues 71 to 132; that stretch reads VRHKRQALQD…NARRRLKNTV (62 aa). Disordered regions lie at residues 159 to 189 and 245 to 301; these read VSSD…VHHP and TRQR…PSKD.

Belongs to the TALE/IRO homeobox family.

The protein localises to the nucleus. Its function is as follows. May act as a morphogenetic regulator of cell adhesion. The protein is Homeobox protein Mohawk (MKX) of Homo sapiens (Human).